The sequence spans 431 residues: 3-phosphoshikimate 1-carboxyvinyltransferase (431 aa).

3 residues coordinate 3-phosphoshikimate: lysine 20, serine 21, and arginine 25. Phosphoenolpyruvate is bound at residue lysine 20. Phosphoenolpyruvate contacts are provided by glycine 91 and arginine 119. 3-phosphoshikimate contacts are provided by serine 164, glutamine 166, aspartate 317, and lysine 344. Glutamine 166 contributes to the phosphoenolpyruvate binding site. Aspartate 317 serves as the catalytic Proton acceptor. Phosphoenolpyruvate is bound by residues arginine 348 and arginine 390.

It belongs to the EPSP synthase family. As to quaternary structure, monomer.

It is found in the cytoplasm. The enzyme catalyses 3-phosphoshikimate + phosphoenolpyruvate = 5-O-(1-carboxyvinyl)-3-phosphoshikimate + phosphate. Its pathway is metabolic intermediate biosynthesis; chorismate biosynthesis; chorismate from D-erythrose 4-phosphate and phosphoenolpyruvate: step 6/7. Its function is as follows. Catalyzes the transfer of the enolpyruvyl moiety of phosphoenolpyruvate (PEP) to the 5-hydroxyl of shikimate-3-phosphate (S3P) to produce enolpyruvyl shikimate-3-phosphate and inorganic phosphate. The polypeptide is 3-phosphoshikimate 1-carboxyvinyltransferase (Aquifex aeolicus (strain VF5)).